A 375-amino-acid chain; its full sequence is Protein MGF 360-5L (375 aa).

This sequence belongs to the asfivirus MGF 360 family.

Functionally, plays a role in virus cell tropism, and may be required for efficient virus replication in macrophages. The sequence is that of Protein MGF 360-5L from African swine fever virus (isolate Portugal/Lis 57/1957) (ASFV).